Here is a 232-residue protein sequence, read N- to C-terminus: Ion-translocating oxidoreductase complex subunit E (232 aa).

The next 6 membrane-spanning stretches (helical) occupy residues 18-38 (ALVQ…VTNG), 39-59 (LGLG…VSII), 69-89 (IPIF…LMNA), 93-113 (ELYQ…AIIG), 128-148 (AFDG…LGAM), and 182-202 (PFLL…LIAA).

This sequence belongs to the NqrDE/RnfAE family. In terms of assembly, the complex is composed of six subunits: RnfA, RnfB, RnfC, RnfD, RnfE and RnfG.

The protein resides in the cell inner membrane. Its function is as follows. Part of a membrane-bound complex that couples electron transfer with translocation of ions across the membrane. In Pseudoalteromonas atlantica (strain T6c / ATCC BAA-1087), this protein is Ion-translocating oxidoreductase complex subunit E.